Here is a 273-residue protein sequence, read N- to C-terminus: Protein B4 (273 aa).

Residues M1–S24 form a disordered region. Positions S40–K118 constitute an H15 domain. The segment at V120–N273 is disordered. A compositionally biased stretch (basic and acidic residues) spans A154–T256. 3 tandem repeats follow at residues K189–N198, K199–N208, and K209–A217. The interval K189 to A217 is 3 X 10 AA tandem repeats. Positions A264–N273 are enriched in basic residues.

It belongs to the histone H1/H5 family. In terms of assembly, interacts with nap1l1.

It is found in the nucleus. The protein resides in the chromosome. The polypeptide is Protein B4 (b4) (Xenopus laevis (African clawed frog)).